The following is a 277-amino-acid chain: Large ribosomal subunit protein mL46 (277 aa).

Lys-228 is modified (N6-acetyllysine).

This sequence belongs to the mitochondrion-specific ribosomal protein mL46 family. As to quaternary structure, component of the mitochondrial ribosome large subunit (39S) which comprises a 16S rRNA and about 50 distinct proteins.

The protein resides in the mitochondrion. This is Large ribosomal subunit protein mL46 (MRPL46) from Bos taurus (Bovine).